The chain runs to 314 residues: tRNA dimethylallyltransferase (314 aa).

15–22 is an ATP binding site; that stretch reads GPTATGKS. 17–22 contacts substrate; the sequence is TATGKS. Positions 40–43 are interaction with substrate tRNA; the sequence is DSML.

Belongs to the IPP transferase family. As to quaternary structure, monomer. Mg(2+) serves as cofactor.

It catalyses the reaction adenosine(37) in tRNA + dimethylallyl diphosphate = N(6)-dimethylallyladenosine(37) in tRNA + diphosphate. Functionally, catalyzes the transfer of a dimethylallyl group onto the adenine at position 37 in tRNAs that read codons beginning with uridine, leading to the formation of N6-(dimethylallyl)adenosine (i(6)A). The sequence is that of tRNA dimethylallyltransferase from Pelotomaculum thermopropionicum (strain DSM 13744 / JCM 10971 / SI).